We begin with the raw amino-acid sequence, 351 residues long: Selenide, water dikinase (351 aa).

Residue U15 is part of the active site. Residue U15 is a non-standard amino acid, selenocysteine. ATP-binding positions include K18 and 47 to 49; that span reads DNE. D50 contributes to the Mg(2+) binding site. ATP contacts are provided by residues D67, D90, and 138–140; that span reads GHS. Mg(2+) is bound at residue D90. D227 serves as a coordination point for Mg(2+).

This sequence belongs to the selenophosphate synthase 1 family. Class I subfamily. Homodimer. It depends on Mg(2+) as a cofactor.

The catalysed reaction is hydrogenselenide + ATP + H2O = selenophosphate + AMP + phosphate + 2 H(+). Functionally, synthesizes selenophosphate from selenide and ATP. This Nitratidesulfovibrio vulgaris (strain DP4) (Desulfovibrio vulgaris) protein is Selenide, water dikinase.